Consider the following 354-residue polypeptide: DNA integrity scanning protein DisA (354 aa).

One can recognise a DAC domain in the interval 6–144 (DDELKKILKI…GDIKYVLRDS (139 aa)). ATP is bound by residues Gly73, Leu91, and 104-108 (TRHRT).

It belongs to the DisA family. As to quaternary structure, homooctamer. Mg(2+) serves as cofactor.

The enzyme catalyses 2 ATP = 3',3'-c-di-AMP + 2 diphosphate. Its function is as follows. Participates in a DNA-damage check-point that is active prior to asymmetric division when DNA is damaged. DisA forms globular foci that rapidly scan along the chromosomes during sporulation, searching for lesions. When a lesion is present, DisA pauses at the lesion site. This triggers a cellular response that culminates in a temporary block in sporulation initiation. Functionally, also has diadenylate cyclase activity, catalyzing the condensation of 2 ATP molecules into cyclic di-AMP (c-di-AMP). c-di-AMP acts as a signaling molecule that couples DNA integrity with progression of sporulation. The rise in c-di-AMP level generated by DisA while scanning the chromosome, operates as a positive signal that advances sporulation; upon encountering a lesion, the DisA focus arrests at the damaged site and halts c-di-AMP synthesis. The protein is DNA integrity scanning protein DisA of Clostridium perfringens (strain SM101 / Type A).